The following is a 259-amino-acid chain: Tryptophan synthase alpha chain (259 aa).

Catalysis depends on proton acceptor residues Glu35 and Asp46.

This sequence belongs to the TrpA family. As to quaternary structure, tetramer of two alpha and two beta chains.

The enzyme catalyses (1S,2R)-1-C-(indol-3-yl)glycerol 3-phosphate + L-serine = D-glyceraldehyde 3-phosphate + L-tryptophan + H2O. The protein operates within amino-acid biosynthesis; L-tryptophan biosynthesis; L-tryptophan from chorismate: step 5/5. Functionally, the alpha subunit is responsible for the aldol cleavage of indoleglycerol phosphate to indole and glyceraldehyde 3-phosphate. The chain is Tryptophan synthase alpha chain from Methanococcus maripaludis (strain C5 / ATCC BAA-1333).